We begin with the raw amino-acid sequence, 906 residues long: Ribonucleoside-diphosphate reductase large subunit-like protein (906 aa).

2 disordered regions span residues 1-70 and 89-129; these read MNPA…AGNT and VSWR…LSTF. Residues 98 to 109 are compositionally biased toward polar residues; the sequence is PDGTPSVLSLTR.

This sequence belongs to the ribonucleoside diphosphate reductase large chain family.

The protein resides in the virion. The protein localises to the host cytoplasm. Does not possess a ribonucleotide reductase activity. Betaherpesviruses probably use another strategy to expand the dNTP pool in a quiescent host cell. The chain is Ribonucleoside-diphosphate reductase large subunit-like protein from Human cytomegalovirus (strain AD169) (HHV-5).